The primary structure comprises 597 residues: Kelch-like protein 21 (597 aa).

A BTB domain is found at 35–103 (LDVTLEAAGG…SYTGRVAVSG (69 aa)). In terms of domain architecture, BACK spans 138-239 (CLDMQDFAEA…RRFYLLAHVE (102 aa)). Kelch repeat units lie at residues 287 to 335 (ILVL…ALGN), 336 to 382 (DIYV…VLDG), 384 to 422 (LYVV…ACRG), 423 to 470 (RLYA…TLNG), 472 to 512 (MYFV…VLGG), and 513 to 560 (KLYV…SIFR). A disordered region spans residues 570–597 (GRGFELNSGSNDVDAGYHRLPQNPEELH).

In terms of assembly, component of the BCR(KLHL21) E3 ubiquitin ligase complex, at least composed of CUL3, KLHL21 and RBX1.

The protein localises to the cytoplasm. It is found in the cytoskeleton. The protein resides in the spindle. The protein operates within protein modification; protein ubiquitination. Substrate-specific adapter of a BCR (BTB-CUL3-RBX1) E3 ubiquitin-protein ligase complex required for efficient chromosome alignment and cytokinesis. The BCR(KLHL21) E3 ubiquitin ligase complex regulates localization of the chromosomal passenger complex (CPC) from chromosomes to the spindle midzone in anaphase and mediates the ubiquitination of AURKB. Ubiquitination of AURKB by BCR(KLHL21) E3 ubiquitin ligase complex may not lead to its degradation by the proteasome. The sequence is that of Kelch-like protein 21 (Klhl21) from Mus musculus (Mouse).